The sequence spans 146 residues: Leghemoglobin 49 (146 aa).

Residues 2 to 146 (GFTQQQEALV…LATAIKKAMS (145 aa)) enclose the Globin domain. Nitrated tyrosine is present on residues Tyr-24 and Tyr-29. Residue Ser-44 coordinates heme b. Ser-44 carries the post-translational modification Phosphoserine. An O2-binding site is contributed by His-61. Residues His-93 and Lys-96 each coordinate heme b. The residue at position 134 (Tyr-134) is a Nitrated tyrosine.

This sequence belongs to the plant globin family. Monomer. In terms of processing, nitrated in effective nodules and particularly in hypoxic conditions; this mechanism may play a protective role in the symbiosis by buffering toxic peroxynitrite NO(2)(-). Nitration level decrease during nodule senescence. Post-translationally, phosphorylation at Ser-44 disrupts the molecular environment of its porphyrin ring oxygen binding pocket, thus leading to a reduced oxygen consumption and to the delivery of oxygen O(2) to symbiosomes. As to expression, accumulates in root nodules after inoculation by bacteria of the genus Rhizobium.

The protein resides in the cytoplasm. It localises to the cytosol. It is found in the nucleus. Its function is as follows. Leghemoglobin that reversibly binds oxygen O(2) through a pentacoordinated heme iron. In root nodules, facilitates the diffusion of oxygen to the bacteroids while preventing the bacterial nitrogenase from being inactivated by buffering dioxygen, nitric oxide and carbon monoxide, and promoting the formation of reactive oxygen species (ROS, e.g. H(2)O(2)). This role is essential for symbiotic nitrogen fixation (SNF). The protein is Leghemoglobin 49 of Vicia faba (Broad bean).